The sequence spans 599 residues: Aspartate--tRNA(Asp/Asn) ligase (599 aa).

Glutamate 169 contributes to the L-aspartate binding site. The segment at 193-196 (QLFK) is aspartate. Residue arginine 215 participates in L-aspartate binding. ATP-binding positions include 215–217 (RDE) and glutamine 224. Histidine 447 provides a ligand contact to L-aspartate. Glutamate 481 is a binding site for ATP. Arginine 488 provides a ligand contact to L-aspartate. 533 to 536 (GWDR) provides a ligand contact to ATP.

This sequence belongs to the class-II aminoacyl-tRNA synthetase family. Type 1 subfamily. As to quaternary structure, homodimer.

It localises to the cytoplasm. It carries out the reaction tRNA(Asx) + L-aspartate + ATP = L-aspartyl-tRNA(Asx) + AMP + diphosphate. Functionally, aspartyl-tRNA synthetase with relaxed tRNA specificity since it is able to aspartylate not only its cognate tRNA(Asp) but also tRNA(Asn). Reaction proceeds in two steps: L-aspartate is first activated by ATP to form Asp-AMP and then transferred to the acceptor end of tRNA(Asp/Asn). This is Aspartate--tRNA(Asp/Asn) ligase from Pseudarthrobacter chlorophenolicus (strain ATCC 700700 / DSM 12829 / CIP 107037 / JCM 12360 / KCTC 9906 / NCIMB 13794 / A6) (Arthrobacter chlorophenolicus).